We begin with the raw amino-acid sequence, 1438 residues long: DNA polymerase III PolC-type (1438 aa).

Positions 422–578 constitute an Exonuclease domain; it reads YVVFDVETTG…YDTEATAYIF (157 aa).

This sequence belongs to the DNA polymerase type-C family. PolC subfamily.

It localises to the cytoplasm. The catalysed reaction is DNA(n) + a 2'-deoxyribonucleoside 5'-triphosphate = DNA(n+1) + diphosphate. Its function is as follows. Required for replicative DNA synthesis. This DNA polymerase also exhibits 3' to 5' exonuclease activity. This Staphylococcus epidermidis (strain ATCC 35984 / DSM 28319 / BCRC 17069 / CCUG 31568 / BM 3577 / RP62A) protein is DNA polymerase III PolC-type.